A 315-amino-acid chain; its full sequence is Coproporphyrin III ferrochelatase (315 aa).

Residues Tyr13, Arg30, 46 to 47, Ser54, and Tyr125 contribute to the Fe-coproporphyrin III site; that span reads RY. Residues His183 and Glu264 each coordinate Fe(2+).

Belongs to the ferrochelatase family.

The protein localises to the cytoplasm. The catalysed reaction is Fe-coproporphyrin III + 2 H(+) = coproporphyrin III + Fe(2+). Its pathway is porphyrin-containing compound metabolism; protoheme biosynthesis. Functionally, involved in coproporphyrin-dependent heme b biosynthesis. Catalyzes the insertion of ferrous iron into coproporphyrin III to form Fe-coproporphyrin III. This Anoxybacillus flavithermus (strain DSM 21510 / WK1) protein is Coproporphyrin III ferrochelatase.